Here is a 132-residue protein sequence, read N- to C-terminus: Large ribosomal subunit protein bL12 (132 aa).

Belongs to the bacterial ribosomal protein bL12 family. As to quaternary structure, homodimer. Part of the ribosomal stalk of the 50S ribosomal subunit. Forms a multimeric L10(L12)X complex, where L10 forms an elongated spine to which 2 to 4 L12 dimers bind in a sequential fashion. Binds GTP-bound translation factors.

Forms part of the ribosomal stalk which helps the ribosome interact with GTP-bound translation factors. Is thus essential for accurate translation. This chain is Large ribosomal subunit protein bL12, found in Chloroflexus aurantiacus (strain ATCC 29366 / DSM 635 / J-10-fl).